We begin with the raw amino-acid sequence, 504 residues long: DnaJ homolog subfamily C member 3 (504 aa).

The N-terminal stretch at 1 to 31 (MVAPGSVGSRLGAVFPFLLVLVDLQYEGAEC) is a signal peptide. TPR repeat units follow at residues 37-70 (VEKH…DPDN), 72-104 (IAYY…KMDF), 105-138 (TAAR…NPSE), 154-187 (MQRL…CVWD), 188-221 (AELR…KSDN), 222-255 (TEAF…DQDH), 268-301 (LNKL…EPSV), 306-339 (VRSK…EPDN), and 340-373 (VNAL…NEND). Cysteine 248 and cysteine 258 are disulfide-bonded. Position 274 is a phosphoserine (serine 274). The cysteines at positions 313 and 329 are disulfide-linked. The interval 375-393 (QIREGLEKAQRLLKQSQKR) is flexible linker. One can recognise a J domain in the interval 394–462 (DYYKILGVKR…EMRKKFDDGE (69 aa)). Positions 451–481 (DPEMRKKFDDGEDPLDAESQQGGGGNPFHRS) are disordered.

Interacts with EIF2AK4/GCN2; this interaction occurs under endoplasmic reticulum (ER) stress, hypothermic and amino acid starving stress conditions and inhibits EIF2AK4/GCN2 kinase activity. Interacts with EIF2AK3. Interacts with EIF2AK2. Forms a trimeric complex with DNAJB1 and HSPA8. Interacts with THAP12. As to expression, widely expressed, with high level in the liver.

It is found in the endoplasmic reticulum. Involved in the unfolded protein response (UPR) during endoplasmic reticulum (ER) stress. Acts as a negative regulator of the EIF2AK4/GCN2 kinase activity by preventing the phosphorylation of eIF-2-alpha at 'Ser-52' and hence attenuating general protein synthesis under ER stress, hypothermic and amino acid starving stress conditions. Co-chaperone of HSPA8/HSC70, it stimulates its ATPase activity. May inhibit both the autophosphorylation of EIF2AK2/PKR and the ability of EIF2AK2 to catalyze phosphorylation of the EIF2A. May inhibit EIF2AK3/PERK activity. In Mus musculus (Mouse), this protein is DnaJ homolog subfamily C member 3 (Dnajc3).